Here is a 226-residue protein sequence, read N- to C-terminus: Thiopurine S-methyltransferase (226 aa).

The S-adenosyl-L-methionine site is built by tryptophan 16, methionine 51, glutamate 72, and arginine 131.

Belongs to the class I-like SAM-binding methyltransferase superfamily. TPMT family.

Its subcellular location is the cytoplasm. The catalysed reaction is S-adenosyl-L-methionine + a thiopurine = S-adenosyl-L-homocysteine + a thiopurine S-methylether.. The protein is Thiopurine S-methyltransferase of Francisella tularensis subsp. novicida (strain U112).